The chain runs to 173 residues: Transmembrane protein 278 (173 aa).

Residues 1–14 (MSEQERETEEDEGV) show a composition bias toward acidic residues. Positions 1–25 (MSEQERETEEDEGVASDTAPMLPRR) are disordered. A run of 3 helical transmembrane segments spans residues 31-51 (HISV…VLSG), 53-73 (ALVG…LVLL), and 107-127 (AALI…AAAA). A disordered region spans residues 141 to 165 (DPARTPAPRRPPRSSGDLADGHPDE).

This sequence belongs to the TMEM88 family.

Its subcellular location is the membrane. This is Transmembrane protein 278 (Tmem278) from Mus musculus (Mouse).